We begin with the raw amino-acid sequence, 394 residues long: Alanine racemase 2 (394 aa).

Residue K39 is the Proton acceptor; specific for D-alanine of the active site. K39 carries the N6-(pyridoxal phosphate)lysine modification. R139 is a substrate binding site. Residue Y272 is the Proton acceptor; specific for L-alanine of the active site. M320 is a binding site for substrate.

Belongs to the alanine racemase family. Pyridoxal 5'-phosphate is required as a cofactor.

The catalysed reaction is L-alanine = D-alanine. The protein operates within amino-acid biosynthesis; D-alanine biosynthesis; D-alanine from L-alanine: step 1/1. Functionally, catalyzes the interconversion of L-alanine and D-alanine. May also act on other amino acids. In Bacillus subtilis (strain 168), this protein is Alanine racemase 2 (alr2).